Reading from the N-terminus, the 427-residue chain is Glutamate-1-semialdehyde 2,1-aminomutase (427 aa).

Position 265 is an N6-(pyridoxal phosphate)lysine (lysine 265).

The protein belongs to the class-III pyridoxal-phosphate-dependent aminotransferase family. HemL subfamily. In terms of assembly, homodimer. The cofactor is pyridoxal 5'-phosphate.

The protein resides in the cytoplasm. The catalysed reaction is (S)-4-amino-5-oxopentanoate = 5-aminolevulinate. The protein operates within porphyrin-containing compound metabolism; protoporphyrin-IX biosynthesis; 5-aminolevulinate from L-glutamyl-tRNA(Glu): step 2/2. In Bordetella bronchiseptica (strain ATCC BAA-588 / NCTC 13252 / RB50) (Alcaligenes bronchisepticus), this protein is Glutamate-1-semialdehyde 2,1-aminomutase.